The following is a 60-amino-acid chain: Large ribosomal subunit protein bL32 (60 aa).

Residues 1-22 (MAVPKKKTSKSRRDMRRSHHAL) are compositionally biased toward basic residues. The tract at residues 1 to 27 (MAVPKKKTSKSRRDMRRSHHALKGSAY) is disordered.

It belongs to the bacterial ribosomal protein bL32 family.

The chain is Large ribosomal subunit protein bL32 from Rhodospirillum centenum (strain ATCC 51521 / SW).